A 390-amino-acid chain; its full sequence is MLKVKNFLGSRLKSFPTRKGKSDKECCRSLTSKLSVNEEYKEAFRTNSYLETRTKAEDQLGITSCSKLSSSSPSPSSSSDLSFHSHFTDYLLDPPQETLDALMQDSSLDNLIVTFFDLSSEACDVCETLLQCLQQIKINHNKIKRVMKIGKRVCNGAKTLECSPEMLCALIFQELSRFAALKNPLCRIVNEAQFRIVHDANSDLLTKLTSKKRRIRRKIRFFKFCKKLGGYSLVITHSAIVITLLIIALHSILGVFAAPALLGLCSFCLLRKKKAKGRMHKSNKDTTLEKLGTQIDIAAKGMFILINDLDTLSRLAGRLCDEIEHRKTVAAMCAKSRKIEVLKEALREFNGHEEKFSDQLQELEEHLYLCFHTINRSRRLVLAQITGQSS.

The next 2 membrane-spanning stretches (helical) occupy residues 228 to 248 (LGGY…LIIA) and 250 to 270 (HSIL…FCLL).

It belongs to the UPF0496 family.

The protein resides in the membrane. This is UPF0496 protein At1g20180 from Arabidopsis thaliana (Mouse-ear cress).